An 81-amino-acid chain; its full sequence is Small ribosomal subunit protein bS18 (81 aa).

Belongs to the bacterial ribosomal protein bS18 family. In terms of assembly, part of the 30S ribosomal subunit. Forms a tight heterodimer with protein bS6.

Binds as a heterodimer with protein bS6 to the central domain of the 16S rRNA, where it helps stabilize the platform of the 30S subunit. The chain is Small ribosomal subunit protein bS18 from Chloroflexus aurantiacus (strain ATCC 29366 / DSM 635 / J-10-fl).